Consider the following 1018-residue polypeptide: DNA polymerase gamma (1018 aa).

The protein belongs to the DNA polymerase type-A family. The cofactor is Mg(2+).

Its subcellular location is the mitochondrion. The catalysed reaction is DNA(n) + a 2'-deoxyribonucleoside 5'-triphosphate = DNA(n+1) + diphosphate. Involved in the replication of mitochondrial DNA. This is DNA polymerase gamma (mip1) from Schizosaccharomyces pombe (strain 972 / ATCC 24843) (Fission yeast).